A 118-amino-acid polypeptide reads, in one-letter code: Small ribosomal subunit protein uS11 (118 aa).

Belongs to the universal ribosomal protein uS11 family. As to quaternary structure, part of the 30S ribosomal subunit. Interacts with proteins S7 and S18. Binds to IF-3.

Functionally, located on the platform of the 30S subunit, it bridges several disparate RNA helices of the 16S rRNA. Forms part of the Shine-Dalgarno cleft in the 70S ribosome. This is Small ribosomal subunit protein uS11 from Carsonella ruddii (strain PV).